A 274-amino-acid chain; its full sequence is Protein bax (274 aa).

Residues 32–64 (TTASQKSHLTKASNKQVSSKQEYSRNSAKSSSL) are compositionally biased toward polar residues. Residues 32-74 (TTASQKSHLTKASNKQVSSKQEYSRNSAKSSSLPDLRKYPSGT) are disordered. Residue 247-254 (GYSTKGKS) coordinates ATP.

The polypeptide is Protein bax (bax) (Escherichia coli (strain K12)).